The chain runs to 412 residues: MRTYVVGGAVRDALLGLPVKDRDWVVVGATPDEMLARGFRPVGKDFPVFLHPQTQEEHALARTERKTGRGYAGFAFHTAPDVTLEEDLARRDLTINAIARDADGTLIDPYGGVADLHGRVFRHVSPAFAEDPVRILRVARFAARFADFSVAPETLALMRAMVDNGEVDHLVAERVWQEFARGLMEAHPARMIRVLRDCGALARLLPELDRLFGVPQPAQHHPEIDTGEHVLMVVEQAAARAHSLPVRWATLLHDLGKGETPAAILPHHYGHEARSADLARQVSERLKAPVDCRDLAVMVAREHGILAQAAVLRAETMVKVLERCDALRRPERFALMLEAAACDHLGRGGERPENWAPAAQWQAALAAVRSVEAGAIARACADKAQVPQRIHAARVAAVKALRAHPPPAEGIS.

Positions 8 and 11 each coordinate ATP. The CTP site is built by glycine 8 and arginine 11. Mg(2+) contacts are provided by aspartate 21 and aspartate 23. ATP-binding residues include arginine 91, arginine 137, and arginine 140. 3 residues coordinate CTP: arginine 91, arginine 137, and arginine 140. Residues 226–327 (TGEHVLMVVE…VKVLERCDAL (102 aa)) form the HD domain.

It belongs to the tRNA nucleotidyltransferase/poly(A) polymerase family. Bacterial CCA-adding enzyme type 1 subfamily. Monomer. Can also form homodimers and oligomers. The cofactor is Mg(2+). Ni(2+) is required as a cofactor.

It carries out the reaction a tRNA precursor + 2 CTP + ATP = a tRNA with a 3' CCA end + 3 diphosphate. The enzyme catalyses a tRNA with a 3' CCA end + 2 CTP + ATP = a tRNA with a 3' CCACCA end + 3 diphosphate. Functionally, catalyzes the addition and repair of the essential 3'-terminal CCA sequence in tRNAs without using a nucleic acid template. Adds these three nucleotides in the order of C, C, and A to the tRNA nucleotide-73, using CTP and ATP as substrates and producing inorganic pyrophosphate. tRNA 3'-terminal CCA addition is required both for tRNA processing and repair. Also involved in tRNA surveillance by mediating tandem CCA addition to generate a CCACCA at the 3' terminus of unstable tRNAs. While stable tRNAs receive only 3'-terminal CCA, unstable tRNAs are marked with CCACCA and rapidly degraded. The polypeptide is Multifunctional CCA protein (Azoarcus sp. (strain BH72)).